The chain runs to 626 residues: Chaperone protein HtpG (626 aa).

Residues 1–341 form an a; substrate-binding region; it reads MRKKKFKAES…SEDLSLNISR (341 aa). Positions 342-552 are b; that stretch reads EMLQHDRQLK…DGEVTIEMEK (211 aa). The tract at residues 553–626 is c; it reads VLNAMPDSQQ…FTNDICKVMV (74 aa).

It belongs to the heat shock protein 90 family. As to quaternary structure, homodimer.

The protein localises to the cytoplasm. Functionally, molecular chaperone. Has ATPase activity. This Bacillus velezensis (strain DSM 23117 / BGSC 10A6 / LMG 26770 / FZB42) (Bacillus amyloliquefaciens subsp. plantarum) protein is Chaperone protein HtpG.